Consider the following 564-residue polypeptide: Dihydroxy-acid dehydratase 2 (564 aa).

A [2Fe-2S] cluster-binding site is contributed by C59. D91 lines the Mg(2+) pocket. [2Fe-2S] cluster is bound at residue C132. 2 residues coordinate Mg(2+): D133 and K134. K134 carries the N6-carboxylysine modification. C204 is a binding site for [2Fe-2S] cluster. Position 454 (E454) interacts with Mg(2+). The active-site Proton acceptor is S480.

Belongs to the IlvD/Edd family. As to quaternary structure, homodimer. Requires [2Fe-2S] cluster as cofactor. Mg(2+) serves as cofactor.

The enzyme catalyses (2R)-2,3-dihydroxy-3-methylbutanoate = 3-methyl-2-oxobutanoate + H2O. It catalyses the reaction (2R,3R)-2,3-dihydroxy-3-methylpentanoate = (S)-3-methyl-2-oxopentanoate + H2O. It functions in the pathway amino-acid biosynthesis; L-isoleucine biosynthesis; L-isoleucine from 2-oxobutanoate: step 3/4. The protein operates within amino-acid biosynthesis; L-valine biosynthesis; L-valine from pyruvate: step 3/4. Functionally, functions in the biosynthesis of branched-chain amino acids. Catalyzes the dehydration of (2R,3R)-2,3-dihydroxy-3-methylpentanoate (2,3-dihydroxy-3-methylvalerate) into 2-oxo-3-methylpentanoate (2-oxo-3-methylvalerate) and of (2R)-2,3-dihydroxy-3-methylbutanoate (2,3-dihydroxyisovalerate) into 2-oxo-3-methylbutanoate (2-oxoisovalerate), the penultimate precursor to L-isoleucine and L-valine, respectively. This is Dihydroxy-acid dehydratase 2 from Staphylococcus saprophyticus subsp. saprophyticus (strain ATCC 15305 / DSM 20229 / NCIMB 8711 / NCTC 7292 / S-41).